A 192-amino-acid chain; its full sequence is Fe/S biogenesis protein NfuA (192 aa).

Positions 149 and 152 each coordinate [4Fe-4S] cluster.

It belongs to the NfuA family. In terms of assembly, homodimer. It depends on [4Fe-4S] cluster as a cofactor.

In terms of biological role, involved in iron-sulfur cluster biogenesis. Binds a 4Fe-4S cluster, can transfer this cluster to apoproteins, and thereby intervenes in the maturation of Fe/S proteins. Could also act as a scaffold/chaperone for damaged Fe/S proteins. This chain is Fe/S biogenesis protein NfuA, found in Shewanella sp. (strain ANA-3).